We begin with the raw amino-acid sequence, 750 residues long: 5-methyltetrahydropteroyltriglutamate--homocysteine methyltransferase (750 aa).

Residues 15–18 (RELK) and Lys-114 contribute to the 5-methyltetrahydropteroyltri-L-glutamate site. Residues 425–427 (IGS) and Glu-478 contribute to the L-homocysteine site. L-methionine contacts are provided by residues 425 to 427 (IGS) and Glu-478. Trp-555 contacts 5-methyltetrahydropteroyltri-L-glutamate. Asp-593 provides a ligand contact to L-homocysteine. Position 593 (Asp-593) interacts with L-methionine. Glu-599 contributes to the 5-methyltetrahydropteroyltri-L-glutamate binding site. Zn(2+) is bound by residues His-636, Cys-638, and Glu-660. Catalysis depends on His-689, which acts as the Proton donor. Residue Cys-721 coordinates Zn(2+).

Belongs to the vitamin-B12 independent methionine synthase family. Zn(2+) serves as cofactor.

It catalyses the reaction 5-methyltetrahydropteroyltri-L-glutamate + L-homocysteine = tetrahydropteroyltri-L-glutamate + L-methionine. Its pathway is amino-acid biosynthesis; L-methionine biosynthesis via de novo pathway; L-methionine from L-homocysteine (MetE route): step 1/1. Functionally, catalyzes the transfer of a methyl group from 5-methyltetrahydrofolate to homocysteine resulting in methionine formation. In Streptococcus sanguinis (strain SK36), this protein is 5-methyltetrahydropteroyltriglutamate--homocysteine methyltransferase.